We begin with the raw amino-acid sequence, 100 residues long: Urease subunit gamma (100 aa).

Belongs to the urease gamma subunit family. In terms of assembly, heterotrimer of UreA (gamma), UreB (beta) and UreC (alpha) subunits. Three heterotrimers associate to form the active enzyme.

The protein localises to the cytoplasm. The enzyme catalyses urea + 2 H2O + H(+) = hydrogencarbonate + 2 NH4(+). It participates in nitrogen metabolism; urea degradation; CO(2) and NH(3) from urea (urease route): step 1/1. This is Urease subunit gamma from Prochlorococcus marinus (strain MIT 9303).